An 89-amino-acid polypeptide reads, in one-letter code: Small ribosomal subunit protein bS16 (89 aa).

It belongs to the bacterial ribosomal protein bS16 family.

In Gloeobacter violaceus (strain ATCC 29082 / PCC 7421), this protein is Small ribosomal subunit protein bS16.